The chain runs to 364 residues: Dihydroflavonol 4-reductase (364 aa).

K45 and Y164 together coordinate NADP(+).

The protein belongs to the NAD(P)-dependent epimerase/dehydratase family. Dihydroflavonol-4-reductase subfamily.

It carries out the reaction a (2R,3S,4S)-leucoanthocyanidin + NADP(+) = a (2R,3R)-dihydroflavonol + NADPH + H(+). It catalyses the reaction (2S)-flavan-4-ol + NADP(+) = (2S)-flavanone + NADPH + H(+). The protein operates within pigment biosynthesis; anthocyanin biosynthesis. Its function is as follows. Bifunctional enzyme involved in flavonoid metabolism. This Callistephus chinensis (China aster) protein is Dihydroflavonol 4-reductase (F).